The chain runs to 274 residues: Large ribosomal subunit protein uL2 (274 aa).

2 disordered regions span residues 28-54 and 223-265; these read APYA…TRHI and VAMN…KRTD. The segment covering 39-48 has biased composition (low complexity); sequence KSGGRNNNGR.

This sequence belongs to the universal ribosomal protein uL2 family. Part of the 50S ribosomal subunit. Forms a bridge to the 30S subunit in the 70S ribosome.

Its function is as follows. One of the primary rRNA binding proteins. Required for association of the 30S and 50S subunits to form the 70S ribosome, for tRNA binding and peptide bond formation. It has been suggested to have peptidyltransferase activity; this is somewhat controversial. Makes several contacts with the 16S rRNA in the 70S ribosome. The polypeptide is Large ribosomal subunit protein uL2 (Alteromonas mediterranea (strain DSM 17117 / CIP 110805 / LMG 28347 / Deep ecotype)).